We begin with the raw amino-acid sequence, 191 residues long: Small ribosomal subunit protein eS7 (191 aa).

It belongs to the eukaryotic ribosomal protein eS7 family.

This Hordeum vulgare (Barley) protein is Small ribosomal subunit protein eS7 (RPS7).